The primary structure comprises 715 residues: Tegument protein UL46 (715 aa).

Disordered regions lie at residues 432-513, 585-605, and 659-680; these read WSAG…CAAQ, DDAR…APYE, and GSAL…PSPV. Positions 444–455 are enriched in gly residues; that stretch reads GPGGHRAGGGTV. Composition is skewed to low complexity over residues 456–467 and 475–488; these read GKRFSGPARQRA and PTLD…VPEA. The segment covering 664–677 has biased composition (pro residues); it reads SPPPRPPPPPPLSP.

It belongs to the herpesviridae HHV-1 VP11/12 protein family. As to quaternary structure, interacts with VP16. Interacts with host LCK, PIK3R1, SHC1 AND GRB2; these interactions promote the activation of the PI3K/AKT pathway. Interacts with host YWHAB. Interacts with ICP0; this interaction targets UL46 for degradation by the proteasome. Post-translationally, phosphorylated by host LCK. The phosphorylation seems to be lymphocyte-specific.

The protein resides in the virion tegument. Its subcellular location is the host cell membrane. In terms of biological role, plays a role in the activation of the host PI3K/AKT pathway to promote cell survival. Interacts with and activates host LCK and thereby recruits downstream partners SHC1, GRB2 and PI3KR1 in order to activate the PI3K pathway by phosphorylating host AKT on its activating residues. This mechanism is inhibited by the viral protein US3 that instead promotes incorporation of UL46 into virions. The polypeptide is Tegument protein UL46 (Human herpesvirus 1 (strain F) (HHV-1)).